A 308-amino-acid polypeptide reads, in one-letter code: D-alanine--D-alanine ligase (308 aa).

The region spanning 108 to 303 (KLVWKAAGLP…YEALCLKVLE (196 aa)) is the ATP-grasp domain. 134–189 (EAELGLPMFVKPACEGSSLGVTKVRKAGELAQAYAEARKFDPLVLAEQFVGGGEYT) contributes to the ATP binding site. Aspartate 257, glutamate 270, and asparagine 272 together coordinate Mg(2+).

It belongs to the D-alanine--D-alanine ligase family. Mg(2+) is required as a cofactor. It depends on Mn(2+) as a cofactor.

The protein localises to the cytoplasm. The enzyme catalyses 2 D-alanine + ATP = D-alanyl-D-alanine + ADP + phosphate + H(+). The protein operates within cell wall biogenesis; peptidoglycan biosynthesis. Cell wall formation. This is D-alanine--D-alanine ligase from Laribacter hongkongensis (strain HLHK9).